Consider the following 603-residue polypeptide: Myotubularin (603 aa).

Over residues 1-13 (MASASTSKYNSHS) the composition is skewed to polar residues. Residues 1 to 25 (MASASTSKYNSHSLENESIKRTSRD) form a disordered region. Phosphoserine is present on residues serine 13 and serine 18. A compositionally biased stretch (basic and acidic residues) spans 14-25 (LENESIKRTSRD). The 69-residue stretch at 29–97 (RDLTEAVPRL…GVISRIEKMG (69 aa)) folds into the GRAM domain. One can recognise a Myotubularin phosphatase domain in the interval 163 to 538 (GWTVYNPVEE…RHLELWVNYY (376 aa)). A 1,2-diacyl-sn-glycero-3-phospho-(1D-myo-inositol-3,5-bisphosphate) is bound by residues asparagine 288, asparagine 313, and isoleucine 314. Asparagine 288, asparagine 313, and isoleucine 314 together coordinate a 1,2-diacyl-sn-glycero-3-phospho-(1D-myo-inositol-3-phosphate). Catalysis depends on cysteine 375, which acts as the Phosphocysteine intermediate. A 1,2-diacyl-sn-glycero-3-phospho-(1D-myo-inositol-3,5-bisphosphate) contacts are provided by serine 376, aspartate 377, glycine 378, tryptophan 379, aspartate 380, arginine 381, lysine 417, and arginine 421. The a 1,2-diacyl-sn-glycero-3-phospho-(1D-myo-inositol-3-phosphate) site is built by serine 376, aspartate 377, glycine 378, tryptophan 379, aspartate 380, and arginine 381. Arginine 421 is an a 1,2-diacyl-sn-glycero-3-phospho-(1D-myo-inositol-3-phosphate) binding site. At threonine 495 the chain carries Phosphothreonine. A disordered region spans residues 579 to 603 (SAKLSDPPTSPSSPSQMMPHVQTHF). Serine 588 carries the post-translational modification Phosphoserine.

This sequence belongs to the protein-tyrosine phosphatase family. Non-receptor class myotubularin subfamily. In terms of assembly, heterodimer with MTMR12. Interacts with KMT2A/MLL1 (via SET domain). Interacts with DES in skeletal muscle but not in cardiac muscle. Interacts with SPEG.

The protein resides in the cytoplasm. The protein localises to the cell membrane. It is found in the cell projection. Its subcellular location is the filopodium. It localises to the ruffle. The protein resides in the late endosome. The protein localises to the myofibril. It is found in the sarcomere. It catalyses the reaction a 1,2-diacyl-sn-glycero-3-phospho-(1D-myo-inositol-3-phosphate) + H2O = a 1,2-diacyl-sn-glycero-3-phospho-(1D-myo-inositol) + phosphate. It carries out the reaction a 1,2-diacyl-sn-glycero-3-phospho-(1D-myo-inositol-3,5-bisphosphate) + H2O = a 1,2-diacyl-sn-glycero-3-phospho-(1D-myo-inositol-5-phosphate) + phosphate. The enzyme catalyses 1,2-dioctanoyl-sn-glycero-3-phospho-(1-D-myo-inositol-3-phosphate) + H2O = 1,2-dioctanoyl-sn-glycero-3-phospho-(1D-myo-inositol) + phosphate. The catalysed reaction is 1,2-dioctanoyl-sn-glycero-3-phospho-(1D-myo-inositol-3,5-bisphosphate) + H2O = 1,2-dioctanoyl-sn-glycero-3-phospho-(1D-myo-inositol-5-phosphate) + phosphate. It catalyses the reaction 1,2-dihexadecanoyl-sn-glycero-3-phospho-(1D-myo-inositol-3,5-phosphate) + H2O = 1,2-dihexadecanoyl-sn-glycero-3-phospho-(1D-myo-inositol-5-phosphate) + phosphate. With respect to regulation, allosterically activated by phosphatidylinositol 5-phosphate (PI5P). Lipid phosphatase which dephosphorylates phosphatidylinositol 3-monophosphate (PI3P) and phosphatidylinositol 3,5-bisphosphate (PI(3,5)P2). Has also been shown to dephosphorylate phosphotyrosine- and phosphoserine-containing peptides. Negatively regulates EGFR degradation through regulation of EGFR trafficking from the late endosome to the lysosome. Plays a role in vacuolar formation and morphology. Regulates desmin intermediate filament assembly and architecture. Plays a role in mitochondrial morphology and positioning. Required for skeletal muscle maintenance but not for myogenesis. In skeletal muscles, stabilizes MTMR12 protein levels. In Homo sapiens (Human), this protein is Myotubularin.